Here is a 330-residue protein sequence, read N- to C-terminus: Aspartate--ammonia ligase (330 aa).

The protein belongs to the class-II aminoacyl-tRNA synthetase family. AsnA subfamily.

The protein resides in the cytoplasm. It carries out the reaction L-aspartate + NH4(+) + ATP = L-asparagine + AMP + diphosphate + H(+). Its pathway is amino-acid biosynthesis; L-asparagine biosynthesis; L-asparagine from L-aspartate (ammonia route): step 1/1. This chain is Aspartate--ammonia ligase, found in Escherichia coli O127:H6 (strain E2348/69 / EPEC).